Consider the following 769-residue polypeptide: Protein lethal(2)denticleless (769 aa).

WD repeat units lie at residues Cys-99–Glu-129, Gly-143–Asp-174, Gly-194–Asp-249, Arg-264–Asn-303, Asn-320–Asn-349, and Gly-362–Arg-393. The disordered stretch occupies residues Thr-196–Ser-221. Position 201 is a phosphothreonine (Thr-201). At Ser-204 the chain carries Phosphoserine. Disordered regions lie at residues Arg-448 to Arg-467, Ala-476 to Thr-562, and Ser-655 to Asp-769. Position 456 is a phosphothreonine (Thr-456). Position 459 is a phosphoserine (Ser-459). Residues Pro-503–Ile-518 are compositionally biased toward polar residues. Ser-524 carries the post-translational modification Phosphoserine. Residues Ser-524 to Ser-533 are compositionally biased toward basic and acidic residues. Residues Ser-546–Thr-562 show a composition bias toward polar residues. Phosphoserine is present on Ser-655. Positions Arg-657–Cys-666 are enriched in polar residues. Ser-679, Ser-691, and Ser-711 each carry phosphoserine. The segment covering Ala-689–Pro-704 has biased composition (low complexity). The segment covering Thr-705–Thr-714 has biased composition (polar residues). The span at Pro-728–Asp-743 shows a compositional bias: low complexity. Over residues Ser-758–Asp-769 the composition is skewed to polar residues.

This sequence belongs to the WD repeat cdt2 family. Component of the DCX(DTL) E3 ubiquitin ligase complex, at least composed of Cul-4, pic/DDB1, l(2)dtl/CDT2 and Roc1a. As to expression, ubiquitously expressed during embryogenesis with no sign of tissue specificity in expression up to stage 17.

The protein localises to the cytoplasm. Its pathway is protein modification; protein ubiquitination. Its function is as follows. Substrate-specific adapter of a DCX (DDB1-CUL4-X-box) E3 ubiquitin-protein ligase complex required for cell cycle control. The DCX(DTL) complex, also named CRL4(CDT2) complex, mediates the polyubiquitination and subsequent degradation of E2f during S phase. E2f degradation is necessary to ensure proper development. Substrates require their interaction with PCNA for their polyubiquitination: substrates interact with PCNA via their PIP-box, leading to recruit the DCX(DTL) complex. The protein is Protein lethal(2)denticleless (l(2)dtl) of Drosophila melanogaster (Fruit fly).